Reading from the N-terminus, the 141-residue chain is Large ribosomal subunit protein uL11 (141 aa).

This sequence belongs to the universal ribosomal protein uL11 family. In terms of assembly, part of the ribosomal stalk of the 50S ribosomal subunit. Interacts with L10 and the large rRNA to form the base of the stalk. L10 forms an elongated spine to which L12 dimers bind in a sequential fashion forming a multimeric L10(L12)X complex. One or more lysine residues are methylated.

In terms of biological role, forms part of the ribosomal stalk which helps the ribosome interact with GTP-bound translation factors. This Pseudothermotoga lettingae (strain ATCC BAA-301 / DSM 14385 / NBRC 107922 / TMO) (Thermotoga lettingae) protein is Large ribosomal subunit protein uL11.